The sequence spans 212 residues: Putative aryl-alcohol dehydrogenase AAD6 (212 aa).

Tyr76 serves as the catalytic Proton donor.

Belongs to the aldo/keto reductase family. Aldo/keto reductase 2 subfamily.

This Saccharomyces cerevisiae (strain ATCC 204508 / S288c) (Baker's yeast) protein is Putative aryl-alcohol dehydrogenase AAD6.